We begin with the raw amino-acid sequence, 153 residues long: uncharacterized protein (153 aa).

The interval 1–88 (MDKDRPGLPA…VPPPQLDHPG (88 aa)) is disordered.

This is an uncharacterized protein from Epstein-Barr virus (strain P3HR-1) (HHV-4).